A 511-amino-acid polypeptide reads, in one-letter code: Putative thymidine phosphorylase 1 (511 aa).

This sequence belongs to the thymidine/pyrimidine-nucleoside phosphorylase family. Type 2 subfamily.

It carries out the reaction thymidine + phosphate = 2-deoxy-alpha-D-ribose 1-phosphate + thymine. This is Putative thymidine phosphorylase 1 from Acidovorax sp. (strain JS42).